The primary structure comprises 210 residues: Chloramphenicol acetyltransferase (210 aa).

Residue H79 is part of the active site.

This sequence belongs to the transferase hexapeptide repeat family.

It catalyses the reaction chloramphenicol + acetyl-CoA = chloramphenicol 3-acetate + CoA. Its function is as follows. This enzyme is an effector of chloramphenicol resistance in bacteria. The chain is Chloramphenicol acetyltransferase (catB2) from Escherichia coli.